The following is a 274-amino-acid chain: Regulator of G-protein signaling rgs-11 (274 aa).

Residues 137 to 256 enclose the RGS domain; it reads SPGLLAASKY…LEDPLYLDLL (120 aa).

The sequence is that of Regulator of G-protein signaling rgs-11 (rgs-11) from Caenorhabditis elegans.